Consider the following 589-residue polypeptide: Vomeromodulin (589 aa).

Positions 1 to 29 (MWVLQALAIMLSIQAGVLDLVEVPPVVRS) are cleaved as a signal peptide. 2 disordered regions span residues 49 to 71 (GLND…SRGG) and 146 to 170 (LLGK…GLGQ). N-linked (GlcNAc...) asparagine glycans are attached at residues N419 and N437.

In terms of processing, N-glycosylated. The N-glycans consist mainly of complex sialylated and fucosylated biantennary structures. In terms of tissue distribution, abundant in the lateral nasal glands. Also present in the posterior septal and vomeronasal glands.

The protein resides in the secreted. The sequence is that of Vomeromodulin from Rattus norvegicus (Rat).